The sequence spans 374 residues: uncharacterized protein (374 aa).

Over residues 1–13 the composition is skewed to basic and acidic residues; that stretch reads METKYHEYDDVQT. Disordered stretches follow at residues 1-20, 91-193, and 236-374; these read METK…PSNK, SPMT…PLNQ, and KINN…SDFE. A compositionally biased stretch (low complexity) spans 95–155; it reads NNNNNNNNNN…NNSSNNNNNN (61 aa). A compositionally biased stretch (polar residues) spans 166–193; the sequence is ISSNQSSPLSIYSTPPNPSSYVSSPLNQ. Residues 242 to 262 are compositionally biased toward pro residues; sequence APPPPPKACAPPPPPPPPPPI. Over residues 277 to 300 the composition is skewed to low complexity; that stretch reads NNNNNNNNNNNSSNTNDSNNTNNT.

This is an uncharacterized protein from Dictyostelium discoideum (Social amoeba).